The chain runs to 375 residues: Nucleosome assembly protein 1-like 4 (375 aa).

A disordered region spans residues 1–28; the sequence is MAENSLSDGGPADSVEAAKNASNTEKLT. Ala-2 bears the N-acetylalanine mark. A phosphoserine mark is found at Ser-5, Ser-7, and Ser-49. Thr-51 carries the phosphothreonine modification. Ser-53 and Ser-54 each carry phosphoserine. Thr-58 carries the post-translational modification Phosphothreonine. The residue at position 105 (Lys-105) is an N6-acetyllysine. Ser-125 is subject to Phosphoserine. Residue Lys-146 is modified to N6-acetyllysine. Residues 265–271 carry the Nuclear localization signal motif; the sequence is IKKKQKH. Ser-304 carries the phosphoserine modification. The interval 339–375 is disordered; sequence AIEDDDNFEEGEEGEEEELEGDEEGEDEDDADVNPKV.

It belongs to the nucleosome assembly protein (NAP) family. In terms of assembly, interacts with core (H2A, H2B, H3, H4) and linker (H1) histones. In terms of processing, polyglutamylated and polyglycylated. These 2 modifications occur exclusively on glutamate residues and result in either polyglutamate or polyglycine chains on the gamma-carboxyl group. Both modifications can coexist on the same protein on adjacent residues, and lowering polyglycylation levels increases polyglutamylation, and reciprocally. Polyglutamylated by TTLL4. Post-translationally, phosphorylated at the G0/G1 boundary but it is not phosphorylated in S-phase. Phosphorylated protein remains in the cytoplasm in a complex with histones during the G0/G1 transition, whereas dephosphorylation triggers its transport into the nucleus at the G1/S-boundary.

It is found in the nucleus. It localises to the cytoplasm. Functionally, acts as a histone chaperone in nucleosome assembly. In condensing spermatids, mediates the loading of the heterodimer composed of histones H2AB1 and H2BC1/TH2B onto the nucleosomes, thereby promoting the replacement of histones to protamine in male germ cells. The sequence is that of Nucleosome assembly protein 1-like 4 (Nap1l4) from Mus musculus (Mouse).